The sequence spans 204 residues: Guanylate kinase (204 aa).

The region spanning 5 to 184 is the Guanylate kinase-like domain; sequence GLLLVLSGPS…AVDHIKAIVD (180 aa). 12–19 serves as a coordination point for ATP; sequence GPSGVGKG.

Belongs to the guanylate kinase family.

The protein localises to the cytoplasm. The enzyme catalyses GMP + ATP = GDP + ADP. In terms of biological role, essential for recycling GMP and indirectly, cGMP. This is Guanylate kinase from Lactobacillus acidophilus (strain ATCC 700396 / NCK56 / N2 / NCFM).